Here is a 304-residue protein sequence, read N- to C-terminus: GTPase Era (304 aa).

In terms of domain architecture, Era-type G spans 11-179; sequence YCGFIAIVGR…QKIVRKSLRE (169 aa). The G1 stretch occupies residues 19 to 26; it reads GRPNVGKS. 19 to 26 lines the GTP pocket; that stretch reads GRPNVGKS. The segment at 45–49 is G2; the sequence is QTTRH. The G3 stretch occupies residues 66–69; the sequence is DTPG. GTP contacts are provided by residues 66–70 and 128–131; these read DTPGL and NKVD. Residues 128 to 131 form a G4 region; the sequence is NKVD. A G5 region spans residues 158 to 160; the sequence is ISA. Positions 210-287 constitute a KH type-2 domain; the sequence is TGEELPYSVT…HLELWVKVKA (78 aa).

It belongs to the TRAFAC class TrmE-Era-EngA-EngB-Septin-like GTPase superfamily. Era GTPase family. In terms of assembly, monomer.

It is found in the cytoplasm. The protein resides in the cell inner membrane. Functionally, an essential GTPase that binds both GDP and GTP, with rapid nucleotide exchange. Plays a role in 16S rRNA processing and 30S ribosomal subunit biogenesis and possibly also in cell cycle regulation and energy metabolism. The protein is GTPase Era of Actinobacillus pleuropneumoniae serotype 5b (strain L20).